The following is a 208-amino-acid chain: V-type ATP synthase subunit D (208 aa).

The protein belongs to the V-ATPase D subunit family.

Functionally, produces ATP from ADP in the presence of a proton gradient across the membrane. The chain is V-type ATP synthase subunit D from Streptococcus pyogenes serotype M6 (strain ATCC BAA-946 / MGAS10394).